The primary structure comprises 431 residues: ETS domain-containing protein Elk-4 (431 aa).

The ETS DNA-binding region spans 5-85 (ITLWQFLLQL…NGQKFVYKFV (81 aa)). Positions 114 to 139 (SSSSKDVENGGKDKPPQPGAKTSSRN) are disordered. Positions 118 to 128 (KDVENGGKDKP) are enriched in basic and acidic residues. A Glycyl lysine isopeptide (Lys-Gly) (interchain with G-Cter in SUMO2) cross-link involves residue K167. S180 is modified (phosphoserine). Disordered stretches follow at residues 251-282 (TTPPISSIPPLQEPPRTPSPPLSSHPDIDTDI), 294-323 (ENLSLEPKDQDSVLLEKDKVNNSSRSKKPK), and 411-431 (TLSGLDGPSTPGPFSPDLQKT). Residues 261 to 273 (LQEPPRTPSPPLS) show a composition bias toward pro residues. The segment covering 299 to 313 (EPKDQDSVLLEKDKV) has biased composition (basic and acidic residues).

It belongs to the ETS family. In terms of assembly, interacts with SIRT7.

The protein resides in the nucleus. Its function is as follows. Involved in both transcriptional activation and repression. Interaction with SIRT7 leads to recruitment and stabilization of SIRT7 at promoters, followed by deacetylation of histone H3 at 'Lys-18' (H3K18Ac) and subsequent transcription repression. Forms a ternary complex with the serum response factor (SRF). Requires DNA-bound SRF for ternary complex formation and makes extensive DNA contacts to the 5'side of SRF, but does not bind DNA autonomously. This chain is ETS domain-containing protein Elk-4 (ELK4), found in Homo sapiens (Human).